We begin with the raw amino-acid sequence, 346 residues long: Putative F-box/kelch-repeat protein At1g27420 (346 aa).

Residues 9 to 56 (PIIPGLTDDVAELCVSKIPRSSFQITSQVCRRWRSFLRSQHFAAVRKL) enclose the F-box domain. Kelch repeat units follow at residues 62–109 (EFLC…VLDG), 111–167 (KIVF…EVNG), 168–215 (LLYV…AFSS), 217–257 (LYAV…VRNK), and 259–300 (YFMD…VWNN).

The polypeptide is Putative F-box/kelch-repeat protein At1g27420 (Arabidopsis thaliana (Mouse-ear cress)).